Consider the following 357-residue polypeptide: Fructose-1,6-bisphosphatase class 1 2 (357 aa).

Residues Glu90, Asp112, Leu114, and Asp115 each coordinate Mg(2+). Substrate is bound by residues 115-118 (DGSS) and Asn206. Glu278 provides a ligand contact to Mg(2+).

Belongs to the FBPase class 1 family. In terms of assembly, homotetramer. It depends on Mg(2+) as a cofactor.

Its subcellular location is the cytoplasm. The enzyme catalyses beta-D-fructose 1,6-bisphosphate + H2O = beta-D-fructose 6-phosphate + phosphate. It functions in the pathway carbohydrate biosynthesis; gluconeogenesis. This chain is Fructose-1,6-bisphosphatase class 1 2, found in Dechloromonas aromatica (strain RCB).